A 992-amino-acid chain; its full sequence is Sorting nexin-19 (992 aa).

The PXA domain occupies 95–272 (ERQLEREINR…VLVGIFSKAR (178 aa)). The disordered stretch occupies residues 410-442 (ALEPKDGEASEGAEAEEGPGTETETGLPVSTLN). Residues 418 to 428 (ASEGAEAEEGP) are compositionally biased toward acidic residues. The region spanning 533 to 663 (LRITGTITAR…EFLALNTDAR (131 aa)) is the PX domain. A 1,2-diacyl-sn-glycero-3-phospho-(1D-myo-inositol-3-phosphate)-binding residues include Arg582 and Arg629. Disordered regions lie at residues 692–726 (FPRS…SRLR), 778–797 (QPTK…RVDS), and 973–992 (AATT…GVSS). Basic and acidic residues-rich tracts occupy residues 709–719 (TESKPQTEGKK) and 782–795 (APEK…KGRV). The segment covering 980 to 992 (DTPGNSKRMGVSS) has biased composition (polar residues).

It belongs to the sorting nexin family. In terms of assembly, interacts with PTPRN.

Its subcellular location is the early endosome membrane. It is found in the cytoplasmic vesicle membrane. Its function is as follows. Plays a role in intracellular vesicle trafficking and exocytosis. May play a role in maintaining insulin-containing dense core vesicles in pancreatic beta-cells and in preventing their degradation. May play a role in insulin secretion. Interacts with membranes containing phosphatidylinositol 3-phosphate (PtdIns(3P)). The sequence is that of Sorting nexin-19 (SNX19) from Homo sapiens (Human).